The primary structure comprises 394 residues: E3 ubiquitin-protein ligase RNF149 (394 aa).

A signal peptide spans 1–31 (MAARRRPAAGVGARDALAVLALALCTPGVGG). N-linked (GlcNAc...) asparagine glycosylation is found at N51 and N141. Residues 66–171 (SSLREERQGL…PKGREIFDLV (106 aa)) form the PA domain. Residues 197 to 217 (VVFVAIAFITMMIISLAWLIF) form a helical membrane-spanning segment. The RING-type; atypical zinc-finger motif lies at 265-306 (CAVCIENFKVKDVIRILPCKHIFHRICIDPWLLDHRTCPMCK). Residues 321 to 394 (DTQELPTPEA…SEPQHGGSIC (74 aa)) form a disordered region. Residue T327 is modified to Phosphothreonine. N339 is a glycosylation site (N-linked (GlcNAc...) asparagine). Residues S341 and S344 each carry the phosphoserine modification. Over residues 352–362 (SNLPSSSSSES) the composition is skewed to low complexity.

It localises to the membrane. It catalyses the reaction S-ubiquitinyl-[E2 ubiquitin-conjugating enzyme]-L-cysteine + [acceptor protein]-L-lysine = [E2 ubiquitin-conjugating enzyme]-L-cysteine + N(6)-ubiquitinyl-[acceptor protein]-L-lysine.. It participates in protein modification; protein ubiquitination. E3 ubiquitin-protein ligase. Ubiquitinates BRAF, inducing its proteasomal degradation. This chain is E3 ubiquitin-protein ligase RNF149 (Rnf149), found in Mus musculus (Mouse).